A 586-amino-acid chain; its full sequence is DNA-binding protein RFX8 (586 aa).

The segment at residues 22–97 (VIQWLVDNFC…YHYDGICIKK (76 aa)) is a DNA-binding region (RFX-type winged-helix).

It belongs to the RFX family.

The protein localises to the nucleus. Functionally, may be a transcription factor. This chain is DNA-binding protein RFX8 (RFX8), found in Homo sapiens (Human).